Consider the following 287-residue polypeptide: ATP synthase gamma chain (287 aa).

This sequence belongs to the ATPase gamma chain family. As to quaternary structure, F-type ATPases have 2 components, CF(1) - the catalytic core - and CF(0) - the membrane proton channel. CF(1) has five subunits: alpha(3), beta(3), gamma(1), delta(1), epsilon(1). CF(0) has three main subunits: a, b and c.

Its subcellular location is the cell membrane. Produces ATP from ADP in the presence of a proton gradient across the membrane. The gamma chain is believed to be important in regulating ATPase activity and the flow of protons through the CF(0) complex. The chain is ATP synthase gamma chain from Wolbachia sp. subsp. Drosophila simulans (strain wRi).